A 250-amino-acid chain; its full sequence is 1-(5-phosphoribosyl)-5-[(5-phosphoribosylamino)methylideneamino] imidazole-4-carboxamide isomerase (250 aa).

Residue aspartate 12 is the Proton acceptor of the active site. The active-site Proton donor is the aspartate 133.

This sequence belongs to the HisA/HisF family.

It localises to the cytoplasm. The catalysed reaction is 1-(5-phospho-beta-D-ribosyl)-5-[(5-phospho-beta-D-ribosylamino)methylideneamino]imidazole-4-carboxamide = 5-[(5-phospho-1-deoxy-D-ribulos-1-ylimino)methylamino]-1-(5-phospho-beta-D-ribosyl)imidazole-4-carboxamide. Its pathway is amino-acid biosynthesis; L-histidine biosynthesis; L-histidine from 5-phospho-alpha-D-ribose 1-diphosphate: step 4/9. In Zymomonas mobilis subsp. mobilis (strain ATCC 31821 / ZM4 / CP4), this protein is 1-(5-phosphoribosyl)-5-[(5-phosphoribosylamino)methylideneamino] imidazole-4-carboxamide isomerase.